We begin with the raw amino-acid sequence, 817 residues long: Trehalose-phosphatase (817 aa).

The glycosyltransferase stretch occupies residues 1-547 (MSVYGKIPST…LAATKTDQRI (547 aa)).

The protein in the N-terminal section; belongs to the glycosyltransferase 20 family. This sequence in the C-terminal section; belongs to the trehalose phosphatase family. Component of the trehalose synthase complex that contains at least tps1, ntp1, and tpp1. Interacts with tps1. Interacts with ntp1. The cofactor is Mg(2+).

The catalysed reaction is alpha,alpha-trehalose 6-phosphate + H2O = alpha,alpha-trehalose + phosphate. The protein operates within carbohydrate biosynthesis. In terms of biological role, phosphatase catalytic subunit of the trehalose synthase complex that catalyzes the production of trehalose from glucose-6-phosphate and UDP-alpha-D-glucose in a two step process. The disaccharide trehalose serves as a storage carbohydrate that is mobilized during nutrient stress and spore germination. Together with ntp1, regulates the level of trehalose as a protectant for cell integrity during thermal, osmotic, and oxidative stress. This Schizosaccharomyces pombe (strain 972 / ATCC 24843) (Fission yeast) protein is Trehalose-phosphatase.